We begin with the raw amino-acid sequence, 512 residues long: Maturase K (512 aa).

This sequence belongs to the intron maturase 2 family. MatK subfamily.

It is found in the plastid. The protein localises to the chloroplast. Its function is as follows. Usually encoded in the trnK tRNA gene intron. Probably assists in splicing its own and other chloroplast group II introns. This Ginkgo biloba (Ginkgo) protein is Maturase K.